Here is a 156-residue protein sequence, read N- to C-terminus: ATP synthase subunit b (156 aa).

Residues 13 to 33 (AFIIFVWFCMKFVWPPLMNAI) form a helical membrane-spanning segment.

The protein belongs to the ATPase B chain family. In terms of assembly, F-type ATPases have 2 components, F(1) - the catalytic core - and F(0) - the membrane proton channel. F(1) has five subunits: alpha(3), beta(3), gamma(1), delta(1), epsilon(1). F(0) has three main subunits: a(1), b(2) and c(10-14). The alpha and beta chains form an alternating ring which encloses part of the gamma chain. F(1) is attached to F(0) by a central stalk formed by the gamma and epsilon chains, while a peripheral stalk is formed by the delta and b chains.

The protein localises to the cell inner membrane. Functionally, f(1)F(0) ATP synthase produces ATP from ADP in the presence of a proton or sodium gradient. F-type ATPases consist of two structural domains, F(1) containing the extramembraneous catalytic core and F(0) containing the membrane proton channel, linked together by a central stalk and a peripheral stalk. During catalysis, ATP synthesis in the catalytic domain of F(1) is coupled via a rotary mechanism of the central stalk subunits to proton translocation. In terms of biological role, component of the F(0) channel, it forms part of the peripheral stalk, linking F(1) to F(0). The chain is ATP synthase subunit b from Shewanella sediminis (strain HAW-EB3).